The sequence spans 853 residues: EF-hand domain-containing family member B (853 aa).

Disordered regions lie at residues 1–31 and 244–266; these read MCSF…TRAP and AQQP…PGNI. 2 consecutive EF-hand domains span residues 581–616 and 617–652; these read QNFD…ANLH and LDKM…KDRI. Asp594, Asp598, Glu605, Asp630, Asp632, Asp634, and Glu641 together coordinate Ca(2+).

As to quaternary structure, microtubule inner protein component of sperm flagellar doublet microtubules. Interacts with STIM1 and ORAI1; the interactions take place upon Ca(2+)-store depletion and dissociate through a Ca(2+)-dependent mechanism. Interaction with STIM1 inhibits STIM1 interaction with SARAF.

Its subcellular location is the cytoplasm. It is found in the cytoskeleton. It localises to the cilium axoneme. The protein resides in the flagellum axoneme. Functionally, microtubule inner protein (MIP) part of the dynein-decorated doublet microtubules (DMTs) in cilia axoneme, which is required for motile cilia beating. Cytosolic sensor for calcium, modulates the interaction of STIM1 and ORAI1 upon store depletion and the activation of store-operated Ca(2+) entry (SOCE) and NFAT translocation from cytosol to nucleus. This is EF-hand domain-containing family member B from Mus musculus (Mouse).